A 204-amino-acid chain; its full sequence is High frequency lysogenization protein HflD homolog (204 aa).

Belongs to the HflD family.

It localises to the cytoplasm. It is found in the cell inner membrane. The chain is High frequency lysogenization protein HflD homolog from Stenotrophomonas maltophilia (strain R551-3).